Consider the following 113-residue polypeptide: Large ribosomal subunit protein uL22 (113 aa).

The protein belongs to the universal ribosomal protein uL22 family. As to quaternary structure, part of the 50S ribosomal subunit.

Its function is as follows. This protein binds specifically to 23S rRNA; its binding is stimulated by other ribosomal proteins, e.g. L4, L17, and L20. It is important during the early stages of 50S assembly. It makes multiple contacts with different domains of the 23S rRNA in the assembled 50S subunit and ribosome. In terms of biological role, the globular domain of the protein is located near the polypeptide exit tunnel on the outside of the subunit, while an extended beta-hairpin is found that lines the wall of the exit tunnel in the center of the 70S ribosome. The sequence is that of Large ribosomal subunit protein uL22 from Syntrophomonas wolfei subsp. wolfei (strain DSM 2245B / Goettingen).